We begin with the raw amino-acid sequence, 356 residues long: Alanine racemase (356 aa).

The Proton acceptor; specific for D-alanine role is filled by Lys-35. Lys-35 carries the N6-(pyridoxal phosphate)lysine modification. Residue Arg-130 participates in substrate binding. The active-site Proton acceptor; specific for L-alanine is the Tyr-253. Residue Met-301 coordinates substrate.

This sequence belongs to the alanine racemase family. Requires pyridoxal 5'-phosphate as cofactor.

It carries out the reaction L-alanine = D-alanine. It participates in amino-acid biosynthesis; D-alanine biosynthesis; D-alanine from L-alanine: step 1/1. Its function is as follows. Catalyzes the interconversion of L-alanine and D-alanine. May also act on other amino acids. This chain is Alanine racemase (alr), found in Paraburkholderia phytofirmans (strain DSM 17436 / LMG 22146 / PsJN) (Burkholderia phytofirmans).